The primary structure comprises 78 residues: Large ribosomal subunit protein bL28 (78 aa).

Positions 1–24 (MSKVCQVTGKRPASGNNVSHAHNK) are disordered.

This sequence belongs to the bacterial ribosomal protein bL28 family.

This Nitrosococcus oceani (strain ATCC 19707 / BCRC 17464 / JCM 30415 / NCIMB 11848 / C-107) protein is Large ribosomal subunit protein bL28.